We begin with the raw amino-acid sequence, 445 residues long: Methylenetetrahydrofolate--tRNA-(uracil-5-)-methyltransferase TrmFO (445 aa).

FAD is bound at residue 9–14 (GGGLAG).

This sequence belongs to the MnmG family. TrmFO subfamily. The cofactor is FAD.

Its subcellular location is the cytoplasm. It catalyses the reaction uridine(54) in tRNA + (6R)-5,10-methylene-5,6,7,8-tetrahydrofolate + NADH + H(+) = 5-methyluridine(54) in tRNA + (6S)-5,6,7,8-tetrahydrofolate + NAD(+). The enzyme catalyses uridine(54) in tRNA + (6R)-5,10-methylene-5,6,7,8-tetrahydrofolate + NADPH + H(+) = 5-methyluridine(54) in tRNA + (6S)-5,6,7,8-tetrahydrofolate + NADP(+). Catalyzes the folate-dependent formation of 5-methyl-uridine at position 54 (M-5-U54) in all tRNAs. In Aquifex aeolicus (strain VF5), this protein is Methylenetetrahydrofolate--tRNA-(uracil-5-)-methyltransferase TrmFO.